Here is a 317-residue protein sequence, read N- to C-terminus: MSHGPKQPGAAAAPAGGKAPGQHGGFVVTVKQERGEGPRAGEKGSHEEEPVKKRGWPKGKKRKKILPNGPKAPVTGYVRFLNERREQIRTRHPDLPFPEITKMLGAEWSKLQPTEKQRYLDEAEREKQQYMKELRAYQQSEAYKMCTEKIQEKKIKKEDSSSGLMNTLLNGHKGGDCDGFSTFDVPIFTEEFLDQNKAREAELRRLRKMNVAFEEQNAVLQRHTQSMSSARERLEQELALEERRTLALQQQLQAVRQALTASFASLPVPGTGETPTLGTLDFYMARLHGAIERDPAQHEKLIVRIKEILAQVASEHL.

Over residues 1–17 (MSHGPKQPGAAAAPAGG) the composition is skewed to low complexity. The interval 1 to 71 (MSHGPKQPGA…RKKILPNGPK (71 aa)) is disordered. Residue lysine 31 forms a Glycyl lysine isopeptide (Lys-Gly) (interchain with G-Cter in SUMO2) linkage. Basic and acidic residues predominate over residues 31-52 (KQERGEGPRAGEKGSHEEEPVK). Basic residues predominate over residues 53 to 65 (KRGWPKGKKRKKI). A DNA-binding region (HMG box) is located at residues 70 to 138 (PKAPVTGYVR…QYMKELRAYQ (69 aa)). At serine 160 the chain carries Phosphoserine. A coiled-coil region spans residues 190 to 257 (EEFLDQNKAR…LQQQLQAVRQ (68 aa)).

As to quaternary structure, component of a BHC histone deacetylase complex that contains HDAC1, HDAC2, HMG20B/BRAF35, KDM1A, RCOR1/CoREST and PHF21A/BHC80. The BHC complex may also contain ZMYM2, ZNF217, ZMYM3, GSE1 and GTF2I. Interacts with the BRCA2 tumor suppressor protein. Interacts with DTNB. As to expression, ubiquitously expressed in adult tissues.

The protein resides in the nucleus. It localises to the chromosome. Required for correct progression through G2 phase of the cell cycle and entry into mitosis. Required for RCOR1/CoREST mediated repression of neuronal specific gene promoters. The chain is SWI/SNF-related matrix-associated actin-dependent regulator of chromatin subfamily E member 1-related (HMG20B) from Homo sapiens (Human).